The following is a 333-amino-acid chain: Protein FanF (333 aa).

Residues 1–22 form the signal peptide; that stretch reads MKNKYNLLFFLFLLCYGDVALA.

Three disulfide bonds are present.

Its subcellular location is the fimbrium. In terms of biological role, minor component of K99 fimbriae. Is not required for binding of K99 fimbriae to the ganglioside receptor. May play a role in initiation, elongation and flexibility of the fimbriae. This chain is Protein FanF (fanF), found in Escherichia coli.